Here is a 246-residue protein sequence, read N- to C-terminus: Homeobox protein Crxos (246 aa).

2 DNA-binding regions (homeobox) span residues 22-72 (WEQL…EMRP) and 129-182 (ELTD…RGYR). The Nuclear localization signal motif lies at 163 to 177 (RKDLIRSWFITQRHR).

This sequence belongs to the paired homeobox family. Specifically expressed during the preimplantation stages of embryonic development, between the four-cell to eight-cell stage and the morula stage. Expressed in adult testis. In terms of tissue distribution, detected in early embryos; expression decreases gradually with embryonic development. Also expressed in extraembryonic tissues after E14.5, expression level increases drastically until E18.5, immediately before partum.

Its subcellular location is the nucleus. Transcription factor that acts as a regulator of embryonic stem cell differentiation during the preimplantation stages of embryonic development. Its function is as follows. Transcription factor that acts as a positive regulator of embryonic stem cell differentiation. Functionally, transcription factor that promotes embryonic stem cell pluripotency. In terms of biological role, transcription factor that promotes embryonic stem cell pluripotency. Also involved in extraembryonic tissues development by promoting the expression of placental prolactin family genes. This chain is Homeobox protein Crxos, found in Mus musculus (Mouse).